Consider the following 376-residue polypeptide: Ciliogenesis-associated TTC17-interacting protein (376 aa).

A disordered region spans residues 355-376 (TQEPNDPFVSSHHASPFRNVSH).

It belongs to the CATIP family.

The protein resides in the nucleus. It localises to the cytoplasm. It is found in the cell membrane. The protein localises to the cytoskeleton. In terms of biological role, plays a role in primary ciliogenesis by modulating actin polymerization. The sequence is that of Ciliogenesis-associated TTC17-interacting protein (catip) from Xenopus laevis (African clawed frog).